Consider the following 211-residue polypeptide: Adenylate kinase (211 aa).

Position 13–18 (13–18) interacts with ATP; it reads GAGKGT. Residues 33–62 form an NMP region; the sequence is STGDILRVAVANKTKLGLEAKKFMDAGQLV. Residues threonine 34, arginine 39, 60–62, 88–91, and glutamine 95 contribute to the AMP site; these read QLV and GFPR. Residues 129–161 form an LID region; sequence GRRTSKVTGKIYHIKFNPPVDEKPEDLVQRADD. ATP contacts are provided by residues arginine 130 and 139 to 140; that span reads IY. Arginine 158 and arginine 169 together coordinate AMP. Lysine 197 contacts ATP.

It belongs to the adenylate kinase family. Monomer.

Its subcellular location is the cytoplasm. The enzyme catalyses AMP + ATP = 2 ADP. Its pathway is purine metabolism; AMP biosynthesis via salvage pathway; AMP from ADP: step 1/1. Catalyzes the reversible transfer of the terminal phosphate group between ATP and AMP. Plays an important role in cellular energy homeostasis and in adenine nucleotide metabolism. In Fusobacterium nucleatum subsp. nucleatum (strain ATCC 25586 / DSM 15643 / BCRC 10681 / CIP 101130 / JCM 8532 / KCTC 2640 / LMG 13131 / VPI 4355), this protein is Adenylate kinase.